The following is a 359-amino-acid chain: UbiA prenyltransferase domain-containing protein 1 homolog (359 aa).

A compositionally biased stretch (polar residues) spans 1–16 (MATSSQLLPNGNLSRN). The interval 1 to 23 (MATSSQLLPNGNLSRNGKTKTED) is disordered. The next 8 membrane-spanning stretches (helical) occupy residues 67–89 (ALRP…LAYR), 98–118 (LATF…GNVV), 148–168 (VVSL…LLAV), 177–197 (LALI…GIGF), 200–220 (IALG…LFAF), 262–284 (IVTL…LLFA), 289–311 (FFIF…PQAF), and 335–355 (FFFG…PTFG).

The protein belongs to the UbiA prenyltransferase family.

The protein resides in the mitochondrion membrane. The protein operates within quinol/quinone metabolism; menaquinone biosynthesis. Its function is as follows. Prenyltransferase that mediates the formation of menaquinone-4 (MK-4), a vitamin K2 isoform, thereby acting as a mitochondrial electron carrier. Mediates the conversion of phylloquinone (PK) into MK-4, probably by cleaving the side chain of phylloquinone (PK) to release 2-methyl-1,4-naphthoquinone (menadione; K3) and then prenylating it with geranylgeranyl pyrophosphate (GGPP) to form MK-4. MK-4 acts as a membrane electron carrier downstream of a electron transport chain complex, improving mitochondrial oxygen consumption. The sequence is that of UbiA prenyltransferase domain-containing protein 1 homolog (heix) from Drosophila melanogaster (Fruit fly).